A 416-amino-acid polypeptide reads, in one-letter code: UDP-N-acetylmuramoylalanine--D-glutamate ligase (416 aa).

Position 108–114 (108–114) interacts with ATP; that stretch reads GTTGKTT.

This sequence belongs to the MurCDEF family.

The protein resides in the cytoplasm. It catalyses the reaction UDP-N-acetyl-alpha-D-muramoyl-L-alanine + D-glutamate + ATP = UDP-N-acetyl-alpha-D-muramoyl-L-alanyl-D-glutamate + ADP + phosphate + H(+). The protein operates within cell wall biogenesis; peptidoglycan biosynthesis. Its function is as follows. Cell wall formation. Catalyzes the addition of glutamate to the nucleotide precursor UDP-N-acetylmuramoyl-L-alanine (UMA). This chain is UDP-N-acetylmuramoylalanine--D-glutamate ligase, found in Chlamydia trachomatis serovar L2b (strain UCH-1/proctitis).